A 238-amino-acid polypeptide reads, in one-letter code: Thrombin-like enzyme halystase (238 aa).

The Peptidase S1 domain maps to 1–229 (IIGGDECNIN…HLDWIKSIIA (229 aa)). 6 cysteine pairs are disulfide-bonded: Cys-7–Cys-141, Cys-28–Cys-44, Cys-76–Cys-236, Cys-120–Cys-190, Cys-152–Cys-169, and Cys-180–Cys-205. The active-site Charge relay system is the His-43. N-linked (GlcNAc...) asparagine glycosylation occurs at Asn-81. Asp-88 functions as the Charge relay system in the catalytic mechanism. An N-linked (GlcNAc...) asparagine glycan is attached at Asn-100. Catalysis depends on Ser-184, which acts as the Charge relay system.

It belongs to the peptidase S1 family. Snake venom subfamily. In terms of assembly, monomer. Expressed by the venom gland.

It localises to the secreted. Its activity is regulated as follows. Inhibited by diisopropylfluorophosphate (DFP), PMSF and leupeptin. Its function is as follows. Thrombin-like snake venom serine protease. Cleaves fibrinogen (beta chain of fibrinogen (FGB) and more slowly alpha chain (FGA)) without inducing fibrin clotting and cleaves kininogen to produce bradykinin (KNG), resulting in the reduction of blood pressure. The sequence is that of Thrombin-like enzyme halystase from Gloydius blomhoffii (Mamushi).